Here is a 289-residue protein sequence, read N- to C-terminus: MIRIAIPNKGRLYEPTISIFKDAGLPISGGAESRKLFAKTTDPDIHILFARAADIPEYVQDGAADVGITGIDLITERGAKVETLLDLKFGKASLVLAVPEDSDFQKAEDLEGRKIATEFPEITHQYFKKHGVNVEVIKVSGACEMTPHVGIADAIVDISSSGTTMMINHLKPIETVFSSTVYLIANKESLRTKEKILDIKTALESVLNAKDRRYLMMNVPESSLQAVKEVLPGMSGPTVMKVESSKLPGESILAVHAVVDADLIFTIVNKLKKVGARDVLVVPIERIMP.

It belongs to the ATP phosphoribosyltransferase family. Long subfamily. Mg(2+) is required as a cofactor.

The protein resides in the cytoplasm. It carries out the reaction 1-(5-phospho-beta-D-ribosyl)-ATP + diphosphate = 5-phospho-alpha-D-ribose 1-diphosphate + ATP. It functions in the pathway amino-acid biosynthesis; L-histidine biosynthesis; L-histidine from 5-phospho-alpha-D-ribose 1-diphosphate: step 1/9. Its activity is regulated as follows. Feedback inhibited by histidine. Functionally, catalyzes the condensation of ATP and 5-phosphoribose 1-diphosphate to form N'-(5'-phosphoribosyl)-ATP (PR-ATP). Has a crucial role in the pathway because the rate of histidine biosynthesis seems to be controlled primarily by regulation of HisG enzymatic activity. This Methanosarcina barkeri (strain Fusaro / DSM 804) protein is ATP phosphoribosyltransferase.